The following is a 687-amino-acid chain: Carboxysome assembly protein CcmM (687 aa).

The rbcS-like repeat 1, SSUL1 stretch occupies residues Ser-242–Pro-327. Disordered stretches follow at residues Gly-328 to Ala-355 and Val-442 to Gly-476. Polar residues predominate over residues Ser-335 to Ser-346. The tract at residues Ala-366 to Pro-445 is rbcS-like repeat 2, SSUL2. Residues Gly-451–Gly-472 show a composition bias toward low complexity. The interval Pro-480–Pro-562 is rbcS-like repeat 3, SSUL3. The segment at Asn-565–Ser-590 is disordered. Residues Ala-568–Gly-587 show a composition bias toward low complexity. Residues Ser-599–Pro-687 form a rbcS-like repeat 4, SSUL4 region.

It belongs to the gamma-class carbonic anhydrase family. Probably forms homotrimers. Full length CcmM interacts with CcaA, CcmK1, CcmK2, CcmK4, CcmL, CcmN and itself, while the N-terminus of CcmM (first 249 residues) only interacts with CcaA, CcmM and CcmN. A probable CcmM-CcaA-CcmN complex as well as a CcaA-RuBisCO-CcmM complex can also be isolated. Interacts with full-length CcaA and the first 220 residues of CcaA; surface residues Gln-177 to Gln-188 are responsible in part for binding. In terms of processing, multiple forms of the protein of 73 (full length), 62, 52 (the most predominant form) and 36 kDa are seen even in the presence of protease inhibitors. CcmM52 interacts with CcaA.

The protein resides in the carboxysome. In terms of biological role, functions as a scaffold protein for the assembly of beta-carboxysomes, initiates carboxysome assembly via its N-terminal domain binding to CcaA, CcmK and CcmL. Binds HCO(3)-, suggesting it may play a role in the activity or regulation of bicarbonate dehydration. Also initiates carboxysome assembly by coalescing RuBisCO (ribulose bisphosphate carboxylase, rbcL-rbcS) via its SSU-like domains. Produced as a full-length and a shorter form; both forms are required for correct carboxysome assembly and growth. Despite its strong similarity to gamma-class carbonic anhydrase (CA) it does not have detectable CA activity. Functionally, beta-carboxysome assembly initiates when soluble RuBisCO is condensed into a liquid matrix in a pre-carboxysome by the RbcS-like domains of probably both forms of CcmM. CcmN interacts with the N-terminus of full length CcmM, and then recruits the shell proteins (CcmK) via CcmN's encapsulation peptide. CcmM73 also interacts with CcmK proteins and CcmL directly. Shell formation requires CcmK proteins and CcmO. CcmL caps the otherwise elongated carboxysome. Once fully encapsulated carboxysomes are formed, they migrate within the cell probably via interactions with the cytoskeleton. The protein is Carboxysome assembly protein CcmM of Synechocystis sp. (strain ATCC 27184 / PCC 6803 / Kazusa).